Reading from the N-terminus, the 114-residue chain is Phosphorelay protein LuxU (114 aa).

An HPt domain is found at 19–114 (GSDNVPVLLD…TRDAYRSWTN (96 aa)). Histidine 58 bears the Phosphohistidine mark.

Monomer.

In terms of biological role, phosphorelay protein which receives sensory signals from LuxN and LuxP and transmits them to LuxO, at low cell density. LuxN and LuxP transfer a phosphoryl group to LuxU on His-58 and this phosphoryl group is further transferred to LuxO. At high cell density, as LuxU could function to establish an equilibrium between the aspartyl-phosphate of LuxN and the aspartyl-phosphate of LuxO, LuxU transfers phosphate from LuxO to LuxN (and probably LuxP) and finally phosphate is drained from the system. This Vibrio harveyi (Beneckea harveyi) protein is Phosphorelay protein LuxU (luxU).